We begin with the raw amino-acid sequence, 182 residues long: Kappa-casein (182 aa).

Residues 1–20 form the signal peptide; it reads MKSFLLVVNALALTLPFLAV. Thr-133, Thr-143, Thr-148, and Thr-151 each carry an O-linked (GalNAc...) threonine glycan. A Phosphothreonine; alternate modification is found at Thr-157. O-linked (GalNAc...) threonine; alternate glycosylation occurs at Thr-157. Residues Thr-167, Thr-169, and Thr-178 are each glycosylated (O-linked (GalNAc...) threonine).

This sequence belongs to the kappa-casein family. Heteromultimers composed of alpha-s1 casein and kappa casein linked by disulfide bonds. The N-terminus is blocked. In terms of tissue distribution, mammary gland specific. Secreted in milk.

Its subcellular location is the secreted. Functionally, kappa-casein stabilizes micelle formation, preventing casein precipitation in milk. This Homo sapiens (Human) protein is Kappa-casein (CSN3).